The chain runs to 556 residues: Peptide chain release factor 3 (556 aa).

Residues 28–297 (QQRRNFAIIS…AFLDYALKPG (270 aa)) form the tr-type G domain. Residues 37–44 (SHPDAGKT), 105–109 (DTPGH), and 159–162 (NKMD) contribute to the GTP site.

It belongs to the TRAFAC class translation factor GTPase superfamily. Classic translation factor GTPase family. PrfC subfamily.

Its subcellular location is the cytoplasm. Its function is as follows. Increases the formation of ribosomal termination complexes and stimulates activities of RF-1 and RF-2. It binds guanine nucleotides and has strong preference for UGA stop codons. It may interact directly with the ribosome. The stimulation of RF-1 and RF-2 is significantly reduced by GTP and GDP, but not by GMP. This chain is Peptide chain release factor 3, found in Synechococcus sp. (strain ATCC 27144 / PCC 6301 / SAUG 1402/1) (Anacystis nidulans).